The primary structure comprises 692 residues: Proprotein convertase subtilisin/kexin type 9 (692 aa).

The N-terminal stretch at 1-30 is a signal peptide; sequence MGTVSSRRSWWPLPLLLLLLLLLGPAGARA. The propeptide occupies 31 to 152; the sequence is QEDEDGDYEE…IEEDSSVFAQ (122 aa). Tyr-38 is subject to Sulfotyrosine. Residue Ser-47 is modified to Phosphoserine. The region spanning 77–149 is the Inhibitor I9 domain; it reads TYVVVLKEET…VDYIEEDSSV (73 aa). Positions 155-461 constitute a Peptidase S8 domain; the sequence is PWNLERITPP…GWQLFCRTVW (307 aa). Residues Asp-186 and His-226 each act as charge relay system in the active site. 2 cysteine pairs are disulfide-bonded: Cys-223/Cys-255 and Cys-323/Cys-358. Residue Ser-386 is the Charge relay system of the active site. Residues 450–692 are C-terminal domain; sequence GAGWQLFCRT…HLAQASQELQ (243 aa). 3 disulfide bridges follow: Cys-457/Cys-527, Cys-477/Cys-526, and Cys-486/Cys-509. Residue Asn-533 is glycosylated (N-linked (GlcNAc...) asparagine). 6 disulfide bridges follow: Cys-534–Cys-601, Cys-552–Cys-600, Cys-562–Cys-588, Cys-608–Cys-679, Cys-626–Cys-678, and Cys-635–Cys-654. At Ser-688 the chain carries Phosphoserine.

It belongs to the peptidase S8 family. As to quaternary structure, monomer. Can self-associate to form dimers and higher multimers which may have increased LDLR degrading activity. The precursor protein but not the mature protein may form multimers. Interacts with APOB, VLDLR, LRP8/APOER2 and BACE1. The full-length immature form (pro-PCSK9) interacts with SCNN1A, SCNN1B and SCNN1G. The pro-PCSK9 form (via C-terminal domain) interacts with LDLR. Interacts (via the C-terminal domain) with ANXA2 (via repeat Annexin 1); the interaction inhibits the degradation of LDLR. Ca(2+) serves as cofactor. Cleavage by furin and PCSK5 generates a truncated inactive protein that is unable to induce LDLR degradation. In terms of processing, undergoes autocatalytic cleavage in the endoplasmic reticulum to release the propeptide from the N-terminus and the cleavage of the propeptide is strictly required for its maturation and activation. The cleaved propeptide however remains associated with the catalytic domain through non-covalent interactions, preventing potential substrates from accessing its active site. As a result, it is secreted from cells as a propeptide-containing, enzymatically inactive protein. Post-translationally, phosphorylation protects the propeptide against proteolysis.

It localises to the cytoplasm. It is found in the secreted. Its subcellular location is the endosome. The protein localises to the lysosome. The protein resides in the cell surface. It localises to the endoplasmic reticulum. It is found in the golgi apparatus. With respect to regulation, its proteolytic activity is autoinhibited by the non-covalent binding of the propeptide to the catalytic domain. Inhibited by EGTA. Crucial player in the regulation of plasma cholesterol homeostasis. Binds to low-density lipid receptor family members: low density lipoprotein receptor (LDLR), very low density lipoprotein receptor (VLDLR), apolipoprotein E receptor (LRP1/APOER) and apolipoprotein receptor 2 (LRP8/APOER2), and promotes their degradation in intracellular acidic compartments. Acts via a non-proteolytic mechanism to enhance the degradation of the hepatic LDLR through a clathrin LDLRAP1/ARH-mediated pathway. May prevent the recycling of LDLR from endosomes to the cell surface or direct it to lysosomes for degradation. Can induce ubiquitination of LDLR leading to its subsequent degradation. Inhibits intracellular degradation of APOB via the autophagosome/lysosome pathway in a LDLR-independent manner. Involved in the disposal of non-acetylated intermediates of BACE1 in the early secretory pathway. Inhibits epithelial Na(+) channel (ENaC)-mediated Na(+) absorption by reducing ENaC surface expression primarily by increasing its proteasomal degradation. Regulates neuronal apoptosis via modulation of LRP8/APOER2 levels and related anti-apoptotic signaling pathways. The chain is Proprotein convertase subtilisin/kexin type 9 (PCSK9) from Pan troglodytes (Chimpanzee).